The following is a 776-amino-acid chain: Microtubule-associated protein tau (776 aa).

Residues 1 to 26 (MAEPRQEFEVMEDHAGTYGLGDRKDQ) show a composition bias toward basic and acidic residues. Disordered regions lie at residues 1-263 (MAEP…PAKG) and 276-591 (STEI…LKNV). Ala-2 is modified (N-acetylalanine). Tyr-18 and Tyr-29 each carry phosphotyrosine. Lys-44 participates in a covalent cross-link: Glycyl lysine isopeptide (Lys-Gly) (interchain with G-Cter in ubiquitin). Ser-46 and Ser-61 each carry phosphoserine. A compositionally biased stretch (polar residues) spans 61–71 (SETSDAKSTPT). Phosphothreonine is present on residues Thr-69, Thr-71, and Thr-111. Composition is skewed to basic and acidic residues over residues 179-189 (EGGRHAPELLK) and 207-216 (GGKERPGSKE). Ser-214 carries the phosphoserine modification. A compositionally biased stretch (acidic residues) spans 217–228 (EVDEDRDVDESS). Residues 314–323 (EQAHSEEHLG) show a composition bias toward basic and acidic residues. A compositionally biased stretch (low complexity) spans 324–340 (RAAFPGAPGEGPEARGP). Composition is skewed to basic and acidic residues over residues 344–356 (EDTK…ESSE) and 381–393 (KSKD…DKKA). The span at 440–452 (KYVSSVTPRTGSS) shows a compositional bias: polar residues. Basic and acidic residues predominate over residues 455-466 (KEMKLKGADGKT). Thr-470 carries the post-translational modification Phosphothreonine. Residue Arg-472 is modified to Omega-N-methylarginine. Lys-480 carries the N6,N6-dimethyllysine; alternate modification. The residue at position 480 (Lys-480) is an N6-acetyllysine; alternate. Thr-486, Thr-492, and Thr-498 each carry phosphothreonine. Phosphoserine occurs at positions 502, 526, and 530. Basic and acidic residues predominate over residues 517–528 (RSERGEPPKSGD). A compositionally biased stretch (low complexity) spans 529–549 (RSGYSSPGSPGTPGSRSRTPS). Tyr-532 carries the phosphotyrosine modification. A phosphoserine mark is found at Ser-533, Ser-534, and Ser-537. A phosphothreonine mark is found at Thr-540 and Thr-547. Ser-549 carries the phosphoserine modification. The residue at position 552 (Thr-552) is a Phosphothreonine. An N6-acetyllysine modification is found at Lys-560. Phosphothreonine is present on Thr-566. A phosphoserine mark is found at Ser-570 and Ser-572. Tau/MAP repeat units lie at residues 579–609 (QTAP…GGGK), 610–640 (VQII…GGGS), 641–671 (VQIV…GGGQ), and 672–703 (VEVK…GGGN). Lys-589 participates in a covalent cross-link: Glycyl lysine isopeptide (Lys-Gly) (interchain with G-Cter in ubiquitin). Lys-594 is subject to N6-acetyllysine; alternate. Lys-594 is subject to N6-methyllysine; alternate. Residue Lys-594 forms a Glycyl lysine isopeptide (Lys-Gly) (interchain with G-Cter in ubiquitin); alternate linkage. Position 597 is a phosphoserine (Ser-597). Residue Lys-602 forms a Glycyl lysine isopeptide (Lys-Gly) (interchain with G-Cter in ubiquitin) linkage. N6-acetyllysine; alternate is present on Lys-616. Residue Lys-616 forms a Glycyl lysine isopeptide (Lys-Gly) (interchain with G-Cter in ubiquitin); alternate linkage. Phosphoserine is present on residues Ser-620 and Ser-624. Residue Lys-625 is modified to N6-acetyllysine. A Phosphoserine modification is found at Ser-628. N6-acetyllysine; alternate is present on Lys-633. Lys-633 is covalently cross-linked (Glycyl lysine isopeptide (Lys-Gly) (interchain with G-Cter in ubiquitin); alternate). Ser-640 carries the post-translational modification Phosphoserine. Lys-646 carries the N6,N6-dimethyllysine; alternate modification. Lys-646, Lys-652, and Lys-656 each carry N6-acetyllysine; alternate. Glycyl lysine isopeptide (Lys-Gly) (interchain with G-Cter in ubiquitin); alternate cross-links involve residues Lys-646, Lys-652, and Lys-656. Position 659 is a phosphoserine (Ser-659). N6-acetyllysine; alternate is present on residues Lys-666, Lys-678, and Lys-682. Residues Lys-666, Lys-678, and Lys-682 each participate in a glycyl lysine isopeptide (Lys-Gly) (interchain with G-Cter in ubiquitin); alternate cross-link. An Omega-N-methylarginine modification is found at Arg-684. Ser-687 carries the post-translational modification Phosphoserine. Lys-688 is covalently cross-linked (Glycyl lysine isopeptide (Lys-Gly) (interchain with G-Cter in ubiquitin)). Ser-691 is subject to Phosphoserine. Position 704 is an N6-acetyllysine; alternate (Lys-704). Lys-704 is covalently cross-linked (Glycyl lysine isopeptide (Lys-Gly) (interchain with G-Cter in ubiquitin); alternate). Lys-710 is covalently cross-linked (Glycyl lysine isopeptide (Lys-Gly) (interchain with G-Cter in ubiquitin)). Lys-720 carries the post-translational modification N6-acetyllysine; alternate. Lys-720 is covalently cross-linked (Glycyl lysine isopeptide (Lys-Gly) (interchain with G-Cter in ubiquitin); alternate). Tyr-729 bears the Phosphotyrosine mark. Residues Ser-731 and Ser-735 each carry the phosphoserine modification. The segment at 733–752 (VVSGDTSPRHLSNVSSTGSI) is disordered. The segment covering 736–751 (GDTSPRHLSNVSSTGS) has biased composition (polar residues). Phosphothreonine is present on Thr-738. Ser-739, Ser-744, Ser-751, and Ser-757 each carry phosphoserine. Phosphothreonine is present on Thr-762.

In terms of assembly, interacts with MARK1, MARK2, MARK3 and MARK4. Interacts with SQSTM1 when polyubiquitinated. Interacts with PSMC2 through SQSTM1. Interacts with FKBP4. Binds to CSNK1D. Interacts with SGK1. Interacts with EPM2A; the interaction dephosphorylates MAPT at Ser-396. Interacts with PIN1. Interacts with LRRK2. Interacts with LRP1, leading to endocytosis; this interaction is reduced in the presence of LRPAP1/RAP. Post-translationally, polyubiquitinated. Requires functional TRAF6 and may provoke SQSTM1-dependent degradation by the proteasome. In terms of processing, phosphorylation at various serine and threonine residues in S-P or T-P motifs by proline-directed protein kinases (PDPK1, CDK1, CDK5, GSK3, MAPK) (a few sites per protein in interphase, more in mitosis), and at serine residues in K-X-G-S motifs by MAP/microtubule affinity-regulating kinase (MARK1, MARK2, MARK3 or MARK4), causing detachment from microtubules, and their disassembly. Phosphorylation at Ser-597 by BRSK1 and BRSK2 in neurons affects ability to bind microtubules and plays a role in neuron polarization. Phosphorylation at Ser-214 by SGK1 mediates microtubule depolymerization and neurite formation in hippocampal neurons. Phosphorylated by PHK. Dephosphorylation at several serine and threonine residues by the serine/threonine phosphatase PPP5C.

It localises to the cytoplasm. The protein resides in the cytosol. Its subcellular location is the cell membrane. The protein localises to the cytoskeleton. It is found in the cell projection. It localises to the axon. The protein resides in the dendrite. In terms of biological role, promotes microtubule assembly and stability, and might be involved in the establishment and maintenance of neuronal polarity. The C-terminus binds axonal microtubules while the N-terminus binds neural plasma membrane components, suggesting that tau functions as a linker protein between both. Axonal polarity is predetermined by tau localization (in the neuronal cell) in the domain of the cell body defined by the centrosome. The short isoforms allow plasticity of the cytoskeleton whereas the longer isoforms may preferentially play a role in its stabilization. The sequence is that of Microtubule-associated protein tau (MAPT) from Gorilla gorilla gorilla (Western lowland gorilla).